The chain runs to 362 residues: Spermidine/putrescine import ATP-binding protein PotA (362 aa).

In terms of domain architecture, ABC transporter spans 4–235 (IKLDHITKQY…PVNDFVARFI (232 aa)). 37–44 (GPSGSGKT) is a binding site for ATP.

This sequence belongs to the ABC transporter superfamily. Spermidine/putrescine importer (TC 3.A.1.11.1) family. The complex is composed of two ATP-binding proteins (PotA), two transmembrane proteins (PotB and PotC) and a solute-binding protein (PotD).

It is found in the cell membrane. The catalysed reaction is ATP + H2O + polyamine-[polyamine-binding protein]Side 1 = ADP + phosphate + polyamineSide 2 + [polyamine-binding protein]Side 1.. Part of the ABC transporter complex PotABCD involved in spermidine/putrescine import. Responsible for energy coupling to the transport system. In Lactobacillus delbrueckii subsp. bulgaricus (strain ATCC BAA-365 / Lb-18), this protein is Spermidine/putrescine import ATP-binding protein PotA.